A 126-amino-acid chain; its full sequence is Protein chibby homolog 1 (126 aa).

The span at 1–10 (MPFFGNTFSP) shows a compositional bias: polar residues. The segment at 1 to 26 (MPFFGNTFSPKKTPPRKSASLSNLHS) is disordered. S9 and S20 each carry phosphoserine. A minimal region for the interaction with PKD2 region spans residues 60-112 (IAETGVSGGVDRREVQRLRRRNQQLEEENNLLRLKVDILLDMLSESTAESHLM). Residues 67 to 125 (GGVDRREVQRLRRRNQQLEEENNLLRLKVDILLDMLSESTAESHLMEKELDELRISRKR) are a coiled coil. Residues 77–98 (LRRRNQQLEEENNLLRLKVDIL) are leucine-zipper; mediates homodimerization.

This sequence belongs to the chibby family. As to quaternary structure, homodimer. Homodimerization is essential for nuclear localization and interaction with KPNA4 but is dispensable for interaction with CTNNB1. Interacts with polycystin-2/PKD2 and GM130. Interacts with the C-terminal region of CTNNB1. Interacts (C-terminus) with TCIM (C-terminus), TCIM competes with CTNNB1 for the interaction with CBY1. Interacts with FAM92A; this interaction facilitates targeting of FAM92A to cilium basal body. Interacts with CIBAR2. Interacts with KPNA4. Widely expressed. Expressed at higher levels in heart, skeletal muscle, kidney and placenta. Also found in brain, lung, liver and testis. Significantly down-regulated in thyroid and metastatic uterine tumors.

It is found in the nucleus speckle. The protein localises to the cytoplasm. It localises to the cytoskeleton. The protein resides in the cilium basal body. Its subcellular location is the microtubule organizing center. It is found in the centrosome. The protein localises to the centriole. It localises to the golgi apparatus. The protein resides in the trans-Golgi network. Its subcellular location is the cell projection. It is found in the cilium. The protein localises to the flagellum. It localises to the nucleus. In terms of biological role, inhibits the Wnt/Wingless pathway by binding to CTNNB1/beta-catenin and inhibiting beta-catenin-mediated transcriptional activation through competition with TCF/LEF transcription factors. Has also been shown to play a role in regulating the intracellular trafficking of polycystin-2/PKD2 and possibly of other intracellular proteins. Promotes adipocyte and cardiomyocyte differentiation. The protein is Protein chibby homolog 1 (CBY1) of Homo sapiens (Human).